The primary structure comprises 300 residues: Matrix protein (300 aa).

The segment at 1-36 (MHMFPLGVVEDSDPPGPPIGRASGSPPPGAGRSTAK) is disordered.

In terms of assembly, homodimer. Dimerization is critical for virion formation. Interacts with host ANP32B.

It localises to the virion. The protein localises to the host cell membrane. Functionally, the M protein has a crucial role in virus assembly and interacts with the RNP complex as well as with the viral membrane. Associates with phosphatidylserine (PS) and phosphatidylinositol 4,5-bisphosphate (PIP2) at the plasma membrane. Interaction with PIP2 triggers matrix protein lattice polymerization. Matrix proteins induce host membrane deformation and curvature necessary for virion assembly/budding. This Measles virus (strain Yamagata-1) (MeV) protein is Matrix protein (M).